Reading from the N-terminus, the 304-residue chain is tRNA pseudouridine synthase B (304 aa).

The Nucleophile role is filled by Asp40.

It belongs to the pseudouridine synthase TruB family. Type 1 subfamily.

The catalysed reaction is uridine(55) in tRNA = pseudouridine(55) in tRNA. Functionally, responsible for synthesis of pseudouridine from uracil-55 in the psi GC loop of transfer RNAs. This chain is tRNA pseudouridine synthase B, found in Halalkalibacterium halodurans (strain ATCC BAA-125 / DSM 18197 / FERM 7344 / JCM 9153 / C-125) (Bacillus halodurans).